A 156-amino-acid polypeptide reads, in one-letter code: MLRQFIISRVGRRLQLPMITQSRLASDLDKTEYTTPGEIVDYDDPPHLPVPEYPVRPDEPLETRKQRLLYQSRKRGMLENDLLLSTFVAKHLKDFNAEQTAEYDQLINGVSNDWDIFYWATDTKPTPPQFDTEIMRLLKEHVKNHEKVQRIRQPDL.

The N-terminal 24 residues, 1-24, are a transit peptide targeting the mitochondrion; that stretch reads MLRQFIISRVGRRLQLPMITQSRL.

The protein belongs to the SDHAF2 family. Interacts with the flavoprotein subunit within the SDH catalytic dimer.

The protein localises to the mitochondrion matrix. In terms of biological role, plays an essential role in the assembly of succinate dehydrogenase (SDH), an enzyme complex (also referred to as respiratory complex II) that is a component of both the tricarboxylic acid (TCA) cycle and the mitochondrial electron transport chain, and which couples the oxidation of succinate to fumarate with the reduction of ubiquinone (coenzyme Q) to ubiquinol. Required for flavinylation (covalent attachment of FAD) of the flavoprotein subunit of the SDH catalytic dimer. The sequence is that of Succinate dehydrogenase assembly factor 2-B, mitochondrial from Drosophila sechellia (Fruit fly).